We begin with the raw amino-acid sequence, 59 residues long: UPF0434 protein Ping_0902 (59 aa).

The protein belongs to the UPF0434 family.

This chain is UPF0434 protein Ping_0902, found in Psychromonas ingrahamii (strain DSM 17664 / CCUG 51855 / 37).